We begin with the raw amino-acid sequence, 207 residues long: Histone H1 (207 aa).

Over residues 1 to 15 (MAEVAPAPAAAAPAK) the composition is skewed to low complexity. Disordered stretches follow at residues 1–28 (MAEV…PKKA) and 105–207 (EAKK…PKKK). Alanine 2 carries the N-acetylalanine modification. Over residues 16 to 27 (APKKKAAAKPKK) the composition is skewed to basic residues. The 74-residue stretch at 28-101 (AGPSVGELIV…GASGSFKLNK (74 aa)) folds into the H15 domain. 2 stretches are compositionally biased toward basic residues: residues 117–168 (KAKK…KVKK) and 175–207 (KAAK…PKKK).

The protein belongs to the histone H1/H5 family. Oncorhyncin II is expressed in skin.

It localises to the nucleus. The protein resides in the chromosome. The protein localises to the secreted. Its function is as follows. Histones H1 are necessary for the condensation of nucleosome chains into higher-order structures. In terms of biological role, oncorhyncin II has antibacterial activity against Gram-positive and Gram-negative bacteria at submicromolar concentrations. Potentially important role in mucosal defense. This chain is Histone H1, found in Oncorhynchus mykiss (Rainbow trout).